A 362-amino-acid polypeptide reads, in one-letter code: Cobalt-precorrin-5B C(1)-methyltransferase (362 aa).

Belongs to the CbiD family.

It catalyses the reaction Co-precorrin-5B + S-adenosyl-L-methionine = Co-precorrin-6A + S-adenosyl-L-homocysteine. Its pathway is cofactor biosynthesis; adenosylcobalamin biosynthesis; cob(II)yrinate a,c-diamide from sirohydrochlorin (anaerobic route): step 6/10. Its function is as follows. Catalyzes the methylation of C-1 in cobalt-precorrin-5B to form cobalt-precorrin-6A. The chain is Cobalt-precorrin-5B C(1)-methyltransferase from Geotalea daltonii (strain DSM 22248 / JCM 15807 / FRC-32) (Geobacter daltonii).